A 119-amino-acid chain; its full sequence is Large ribosomal subunit protein uL24 (119 aa).

Belongs to the universal ribosomal protein uL24 family. As to quaternary structure, part of the 50S ribosomal subunit.

Functionally, one of two assembly initiator proteins, it binds directly to the 5'-end of the 23S rRNA, where it nucleates assembly of the 50S subunit. Located at the polypeptide exit tunnel on the outside of the subunit. This Methanococcus maripaludis (strain DSM 14266 / JCM 13030 / NBRC 101832 / S2 / LL) protein is Large ribosomal subunit protein uL24.